The following is a 167-amino-acid chain: RNA pyrophosphohydrolase (167 aa).

Positions 7-160 (PYRPCVGVMV…KRRAYEEVVA (154 aa)) constitute a Nudix hydrolase domain. The short motif at 48 to 69 (GGIDEGEDPLEAACRELYEETG) is the Nudix box element.

The protein belongs to the Nudix hydrolase family. RppH subfamily. Requires a divalent metal cation as cofactor.

Its function is as follows. Accelerates the degradation of transcripts by removing pyrophosphate from the 5'-end of triphosphorylated RNA, leading to a more labile monophosphorylated state that can stimulate subsequent ribonuclease cleavage. This Rhizobium meliloti (strain 1021) (Ensifer meliloti) protein is RNA pyrophosphohydrolase.